The sequence spans 994 residues: Phosphoenolpyruvate carboxylase (994 aa).

Residues 1-66 form a disordered region; it reads MKSSGSARAT…QGRTREDKDR (66 aa). Low complexity-rich tracts occupy residues 14 to 25 and 41 to 54; these read AVSSSSAPAHAE and AAAR…AASA. Active-site residues include histidine 204 and lysine 646.

The protein belongs to the PEPCase type 1 family. The cofactor is Mg(2+).

The catalysed reaction is oxaloacetate + phosphate = phosphoenolpyruvate + hydrogencarbonate. In terms of biological role, forms oxaloacetate, a four-carbon dicarboxylic acid source for the tricarboxylic acid cycle. The sequence is that of Phosphoenolpyruvate carboxylase from Burkholderia pseudomallei (strain 668).